The following is a 151-amino-acid chain: Single-stranded DNA-binding protein, mitochondrial (151 aa).

The N-terminal 16 residues, 1-16 (MFRRPVLQVFRQFVRQ), are a transit peptide targeting the mitochondrion. The 112-residue stretch at 30–141 (LNRVQLLGRV…IIADNIIFLS (112 aa)) folds into the SSB domain. A phosphoserine mark is found at Ser67 and Ser79. Position 113 is an N6-acetyllysine (Lys113). Lys122 carries the N6-succinyllysine modification.

Homotetramer. Interacts with MPG/AAG, through inhibition of its glycosylase activity it potentially prevents formation of DNA breaks in ssDNA, ensuring that base removal primarily occurs in dsDNA. Interacts with POLDIP2. Interacts with PRIMPOL.

It localises to the mitochondrion. Its subcellular location is the mitochondrion matrix. The protein resides in the mitochondrion nucleoid. Binds preferentially and cooperatively to pyrimidine rich single-stranded DNA (ss-DNA). In vitro, required to maintain the copy number of mitochondrial DNA (mtDNA) and plays a crucial role during mtDNA replication by stimulating the activity of the replisome components POLG and TWNK at the replication fork. Promotes the activity of the gamma complex polymerase POLG, largely by organizing the template DNA and eliminating secondary structures to favor ss-DNA conformations that facilitate POLG activity. In addition it is able to promote the 5'-3' unwinding activity of the mtDNA helicase TWNK. May also function in mtDNA repair. This Rattus norvegicus (Rat) protein is Single-stranded DNA-binding protein, mitochondrial (Ssbp1).